The sequence spans 396 residues: Gap junction gamma-1 protein (396 aa).

Residues 1 to 18 (MSWSFLTRLLEEIHNHST) are Cytoplasmic-facing. A helical transmembrane segment spans residues 19–39 (FVGKIWLTVLIVFRIVLTAVG). Over 40–75 (GESIYYDEQSKFVCNTEQPGCENVCYDAFAPLSHVR) the chain is Extracellular. The helical transmembrane segment at 76-96 (FWVFQIILVATPSVMYLGYAI) threads the bilayer. The Cytoplasmic portion of the chain corresponds to 97 to 175 (HKIAKMEHGE…RRIREDGLMK (79 aa)). Residues 145–165 (ELESEKENKEQSQPKPKHDGR) are disordered. Residues 147-156 (ESEKENKEQS) are compositionally biased toward basic and acidic residues. A helical transmembrane segment spans residues 176-198 (IYVLQLLARTVFEVGFLIGQYFL). Over 199-229 (YGFQVHPFYVCSRLPCPHKIDCFISRPTEKT) the chain is Extracellular. The chain crosses the membrane as a helical span at residues 230-250 (IFLLIMYGVTGLCLLLNIWEM). Residues 251 to 396 (LHLGFGTIRD…SGDGKTSVWI (146 aa)) lie on the Cytoplasmic side of the membrane. Residues 303–358 (ELSNAKIAYKQNKANIAQEQQYGSHEEHLPADLETLQREIRMAQERLDLAIQAYHH) adopt a coiled-coil conformation. The tract at residues 357 to 396 (HHQNNPHGPREKKAKVGSKSGSNKSSISSKSGDGKTSVWI) is disordered. The span at 373 to 396 (GSKSGSNKSSISSKSGDGKTSVWI) shows a compositional bias: low complexity.

The protein belongs to the connexin family. Gamma-type subfamily. A connexon is composed of a hexamer of connexins. Interacts with CNST.

It is found in the cell membrane. Its subcellular location is the cell junction. It localises to the gap junction. One gap junction consists of a cluster of closely packed pairs of transmembrane channels, the connexons, through which materials of low MW diffuse from one cell to a neighboring cell. The protein is Gap junction gamma-1 protein (GJC1) of Cricetulus griseus (Chinese hamster).